The chain runs to 231 residues: Eukaryotic translation initiation factor 4E-1 (231 aa).

The disordered stretch occupies residues 1 to 55 (MVVEDTQKSSITDDQITANPNNENEDLEEGEILDDDDSSATSRPPSSSGALARNP). Residues 8-18 (KSSITDDQITA) show a composition bias toward polar residues. The segment covering 23–38 (ENEDLEEGEILDDDDS) has biased composition (acidic residues). Residues 39-48 (SATSRPPSSS) show a composition bias toward low complexity. EIF4G-binding regions lie at residues 56–59 (HPLE) and 66–102 (FDNPSAKSKQAAWGSSIRPIYTFATVEEFWSIYNNIH). Residues 74–79 (KQAAWG), K106, and 124–125 (WE) contribute to the mRNA site. C129 and C167 are joined by a disulfide. The segment at 150-159 (YTLLGMIGEQ) is EIF4G-binding. MRNA-binding positions include 174-179 (RNRQEK) and 219-223 (KKHDR).

This sequence belongs to the eukaryotic initiation factor 4E family. As to quaternary structure, EIF4F is a multi-subunit complex, the composition of which varies with external and internal environmental conditions. It is composed of at least EIF4A, EIF4E and EIF4G. EIF4E is also known to interact with other partners. In higher plants two isoforms of EIF4F have been identified, named isoform EIF4F and isoform EIF(iso)4F. Isoform EIF4F has subunits p220 and p26, whereas isoform EIF(iso)4F has subunits p82 and p28. In terms of assembly, (Microbial infection) Interacts with potyvirus peanut stripe virus (PStV) helper component proteinase (HC-Pro) in the cytoplasm and with PStV viral genome-linked protein (VPg) in the nucleus; these interactions are possible in susceptible hosts but impaired in resistant plants. In terms of processing, according to the redox status, the Cys-129-Cys-167 disulfide bridge may have a role in regulating protein function by affecting its ability to bind capped mRNA. In terms of tissue distribution, expressed ubiquitously with highest levels in young leaves and roots, and lowest levels in flowers.

The protein localises to the nucleus. The protein resides in the cytoplasm. In terms of biological role, component of the protein complex eIF4F, which is involved in the recognition of the mRNA cap, ATP-dependent unwinding of 5'-terminal secondary structure and recruitment of mRNA to the ribosome. Recognizes and binds the 7-methylguanosine-containing mRNA cap during an early step in the initiation of protein synthesis and facilitates ribosome binding by inducing the unwinding of the mRNAs secondary structures. Key component of recessive resistance to potyviruses such as peanut stripe virus (PStV). Its function is as follows. (Microbial infection) Susceptibility host factor required for viral infection by recruiting viral RNAs to the host ribosomal complex via an interaction with viral genome-linked protein (VPg). The sequence is that of Eukaryotic translation initiation factor 4E-1 from Arachis hypogaea (Peanut).